A 118-amino-acid chain; its full sequence is Large ribosomal subunit protein bL20 (118 aa).

The protein belongs to the bacterial ribosomal protein bL20 family.

In terms of biological role, binds directly to 23S ribosomal RNA and is necessary for the in vitro assembly process of the 50S ribosomal subunit. It is not involved in the protein synthesizing functions of that subunit. In Phenylobacterium zucineum (strain HLK1), this protein is Large ribosomal subunit protein bL20.